A 420-amino-acid chain; its full sequence is Protein BDLF2 (420 aa).

Disordered stretches follow at residues 1–21 (MVDEQVAVEHGTVSHTISREE) and 64–129 (AAAV…GGQR). Residues 1–184 (MVDEQVAVEH…AETLAEPPRC (184 aa)) lie on the Intravirion side of the membrane. Low complexity predominate over residues 90–108 (TKTNTQDQNQNQTTRTRTN). A helical; Signal-anchor for type II membrane protein transmembrane segment spans residues 185–205 (FMLSFVFIYYCCYLAFLALLA). Residues 206–420 (FGFNPLFLPS…LEEVMYVMVQ (215 aa)) lie on the Virion surface side of the membrane. N-linked (GlcNAc...) asparagine; by host glycans are attached at residues Asn-258, Asn-264, Asn-300, Asn-304, Asn-371, and Asn-384.

This sequence belongs to the herpesviridae BDLF2 family. Interacts with BMRF2.

The protein resides in the virion membrane. In terms of biological role, rearranges cellular actin to increase intercellular contacts and thereby promote virus cell-to-cell spreading. Induce the outgrowth of long, branched plasma membrane fronds to create intercellular network for virion traffic. The fronds are actin based and RhoA-dependent. This Homo sapiens (Human) protein is Protein BDLF2.